A 301-amino-acid polypeptide reads, in one-letter code: Ras-related GTP-binding protein A (301 aa).

Residues 9 to 16 (GRSESGKT), 57 to 61 (DCGGQ), and 122 to 125 (HKMD) each bind GTP.

This sequence belongs to the GTR/RAG GTP-binding protein family.

The protein resides in the cytoplasm. It localises to the nucleus. Its subcellular location is the lysosome. In terms of biological role, guanine nucleotide-binding protein that plays a crucial role in the cellular response to amino acid availability through regulation of the TOR signaling cascade. In Dictyostelium discoideum (Social amoeba), this protein is Ras-related GTP-binding protein A (ragA).